The following is a 151-amino-acid chain: UPF0178 protein PMI1258 (151 aa).

It belongs to the UPF0178 family.

The chain is UPF0178 protein PMI1258 from Proteus mirabilis (strain HI4320).